A 108-amino-acid chain; its full sequence is UPF0060 membrane protein BLi00854/BL03049 (108 aa).

The next 4 helical transmembrane spans lie at 3-23, 31-51, 60-80, and 86-106; these read IAIGLFLLAGLAEIAGGYLVW, PLWYGLAGGLTLIIYGVIPAF, VYAAYGGVFIILAVLWGWLVD, and LYDWAGAVICLAGVSVMLWAP.

It belongs to the UPF0060 family.

The protein resides in the cell membrane. The polypeptide is UPF0060 membrane protein BLi00854/BL03049 (Bacillus licheniformis (strain ATCC 14580 / DSM 13 / JCM 2505 / CCUG 7422 / NBRC 12200 / NCIMB 9375 / NCTC 10341 / NRRL NRS-1264 / Gibson 46)).